We begin with the raw amino-acid sequence, 132 residues long: Fluoride-specific ion channel FluC 2 (132 aa).

4 helical membrane-spanning segments follow: residues 8-28 (LQLELLELLLVGAGAVPGALL), 41-61 (LLVNVLGAALLGFLSGLPAAP), 66-86 (LLGIGFCGSVTTFSSWMLAAV), and 96-116 (AALGLIGLTLGLGLGAAALGF). Residues glycine 73 and threonine 76 each contribute to the Na(+) site.

This sequence belongs to the fluoride channel Fluc/FEX (TC 1.A.43) family.

The protein resides in the cell inner membrane. It carries out the reaction fluoride(in) = fluoride(out). With respect to regulation, na(+) is not transported, but it plays an essential structural role and its presence is essential for fluoride channel function. In terms of biological role, fluoride-specific ion channel. Important for reducing fluoride concentration in the cell, thus reducing its toxicity. The protein is Fluoride-specific ion channel FluC 2 of Synechococcus sp. (strain CC9605).